The primary structure comprises 544 residues: Chaperonin GroEL (544 aa).

ATP is bound by residues 30-33, Lys51, 87-91, Gly415, and Asp496; these read TLGP and DGTTT.

It belongs to the chaperonin (HSP60) family. Forms a cylinder of 14 subunits composed of two heptameric rings stacked back-to-back. Interacts with the co-chaperonin GroES.

Its subcellular location is the cytoplasm. It catalyses the reaction ATP + H2O + a folded polypeptide = ADP + phosphate + an unfolded polypeptide.. Together with its co-chaperonin GroES, plays an essential role in assisting protein folding. The GroEL-GroES system forms a nano-cage that allows encapsulation of the non-native substrate proteins and provides a physical environment optimized to promote and accelerate protein folding. This Granulibacter bethesdensis (strain ATCC BAA-1260 / CGDNIH1) protein is Chaperonin GroEL.